Reading from the N-terminus, the 69-residue chain is Conotoxin Eb6.1 (69 aa).

Positions 1–17 (VLIIAVLFLTACQLTTA) are cleaved as a signal peptide. A propeptide spanning residues 18–41 (ETYSRGRQKHRARRSTDKNSKWTR) is cleaved from the precursor. Disulfide bonds link Cys-43–Cys-57, Cys-50–Cys-61, and Cys-56–Cys-68.

Belongs to the conotoxin O1 superfamily. In terms of tissue distribution, expressed by the venom duct.

The protein resides in the secreted. The polypeptide is Conotoxin Eb6.1 (E1) (Conus ebraeus (Hebrew cone)).